The sequence spans 145 residues: Hydrophobin-like protein 1 (145 aa).

The first 20 residues, Met1 to Ala20, serve as a signal peptide directing secretion. The N-linked (GlcNAc...) asparagine glycan is linked to Asn36. Intrachain disulfides connect Cys61/Cys121, Cys71/Cys113, Cys72/Cys104, and Cys122/Cys139.

It is found in the secreted. The protein localises to the cell wall. In terms of biological role, aerial growth, conidiation, and dispersal of filamentous fungi in the environment rely upon a capability of their secreting small amphipathic proteins called hydrophobins (HPBs) with low sequence identity. Class I can self-assemble into an outermost layer of rodlet bundles on aerial cell surfaces, conferring cellular hydrophobicity that supports fungal growth, development and dispersal; whereas Class II form highly ordered films at water-air interfaces through intermolecular interactions but contribute nothing to the rodlet structure. In Botryotinia fuckeliana, hydrophobins are not involved in conferring surface hydrophobicity to conidia and aerial hyphae and their function in sclerotia and fruiting bodies remains to be investigated. The sequence is that of Hydrophobin-like protein 1 from Botryotinia fuckeliana (strain B05.10) (Noble rot fungus).